The primary structure comprises 166 residues: Endoribonuclease YbeY (166 aa).

The Zn(2+) site is built by H131, H135, and H141.

The protein belongs to the endoribonuclease YbeY family. Zn(2+) serves as cofactor.

Its subcellular location is the cytoplasm. In terms of biological role, single strand-specific metallo-endoribonuclease involved in late-stage 70S ribosome quality control and in maturation of the 3' terminus of the 16S rRNA. This is Endoribonuclease YbeY from Dehalococcoides mccartyi (strain CBDB1).